A 119-amino-acid chain; its full sequence is Large ribosomal subunit protein bL20 (119 aa).

It belongs to the bacterial ribosomal protein bL20 family.

In terms of biological role, binds directly to 23S ribosomal RNA and is necessary for the in vitro assembly process of the 50S ribosomal subunit. It is not involved in the protein synthesizing functions of that subunit. This Alkaliphilus oremlandii (strain OhILAs) (Clostridium oremlandii (strain OhILAs)) protein is Large ribosomal subunit protein bL20.